Here is a 130-residue protein sequence, read N- to C-terminus: Large ribosomal subunit protein bL12 (130 aa).

This sequence belongs to the bacterial ribosomal protein bL12 family. Homodimer. Part of the ribosomal stalk of the 50S ribosomal subunit. Forms a multimeric L10(L12)X complex, where L10 forms an elongated spine to which 2 to 4 L12 dimers bind in a sequential fashion. Binds GTP-bound translation factors.

Its function is as follows. Forms part of the ribosomal stalk which helps the ribosome interact with GTP-bound translation factors. Is thus essential for accurate translation. This is Large ribosomal subunit protein bL12 from Herpetosiphon aurantiacus (strain ATCC 23779 / DSM 785 / 114-95).